The sequence spans 204 residues: Large ribosomal subunit protein uL4 (204 aa).

A disordered region spans residues 49–76 (KTKGISDVSGTTAKPYGQKRTGRARQGS).

It belongs to the universal ribosomal protein uL4 family. As to quaternary structure, part of the 50S ribosomal subunit.

Functionally, one of the primary rRNA binding proteins, this protein initially binds near the 5'-end of the 23S rRNA. It is important during the early stages of 50S assembly. It makes multiple contacts with different domains of the 23S rRNA in the assembled 50S subunit and ribosome. In terms of biological role, forms part of the polypeptide exit tunnel. This Wolbachia sp. subsp. Drosophila simulans (strain wRi) protein is Large ribosomal subunit protein uL4.